The chain runs to 377 residues: Nitric oxide reductase FlRd-NAD(+) reductase (377 aa).

It belongs to the FAD-dependent oxidoreductase family. FAD is required as a cofactor.

The protein localises to the cytoplasm. The catalysed reaction is 2 reduced [nitric oxide reductase rubredoxin domain] + NAD(+) + H(+) = 2 oxidized [nitric oxide reductase rubredoxin domain] + NADH. It functions in the pathway nitrogen metabolism; nitric oxide reduction. One of at least two accessory proteins for anaerobic nitric oxide (NO) reductase. Reduces the rubredoxin moiety of NO reductase. The sequence is that of Nitric oxide reductase FlRd-NAD(+) reductase from Escherichia coli O17:K52:H18 (strain UMN026 / ExPEC).